The sequence spans 364 residues: Nuclear hormone receptor family member nhr-53 (364 aa).

Positions 20 to 95 form a DNA-binding region, nuclear receptor; the sequence is PSYCLICCEV…VGMQRSSVQQ (76 aa). 2 NR C4-type zinc fingers span residues 23–43 and 59–83; these read CLICCEVADGHHFGAAACRAC and CPKNGQCFILSNVRNMCRACRYEKC. Residues 110 to 363 enclose the NR LBD domain; that stretch reads REEPVLDTMR…KNLYDMFSPT (254 aa).

The protein belongs to the nuclear hormone receptor family.

It is found in the nucleus. Its function is as follows. Orphan nuclear receptor. This Caenorhabditis elegans protein is Nuclear hormone receptor family member nhr-53 (nhr-53).